The primary structure comprises 122 residues: uncharacterized protein (122 aa).

At 1–24 (MKNRKFSNLLLLRLRILCFNKKPA) the chain is on the cytoplasmic side. A helical transmembrane segment spans residues 25 to 45 (FAATSYAFFFRNFSVLIFIMV). The Extracellular segment spans residues 46–57 (PDEKENGAAADN). Residues 58–78 (SFSLLIGRGVVLFLFYCPTAL) traverse the membrane as a helical segment. Residues 79–122 (KMHGPVPAHWFCDKNIEAIQSDGQIRLLRSGPFPWSHGTCIRGA) lie on the Cytoplasmic side of the membrane.

The protein resides in the membrane. This is an uncharacterized protein from Saccharomyces cerevisiae (strain ATCC 204508 / S288c) (Baker's yeast).